Here is a 209-residue protein sequence, read N- to C-terminus: Ion-translocating oxidoreductase complex subunit G (209 aa).

Residues 1 to 8 (MLTAIRKN) are Cytoplasmic-facing. Residues 9–29 (GLILAVFACVSTGLVALTYAL) form a helical membrane-spanning segment. Topologically, residues 30 to 209 (TAEQIQQQEQ…HNQPNPCEGQ (180 aa)) are periplasmic. T175 is modified (FMN phosphoryl threonine).

It belongs to the RnfG family. As to quaternary structure, the complex is composed of six subunits: RnfA, RnfB, RnfC, RnfD, RnfE and RnfG. It depends on FMN as a cofactor.

Its subcellular location is the cell inner membrane. Part of a membrane-bound complex that couples electron transfer with translocation of ions across the membrane. The chain is Ion-translocating oxidoreductase complex subunit G from Vibrio cholerae serotype O1 (strain ATCC 39541 / Classical Ogawa 395 / O395).